A 150-amino-acid chain; its full sequence is Ribonuclease H (150 aa).

An RNase H type-1 domain is found at 7–148; the sequence is ESNIVEIWTD…ADQLATKARM (142 aa). Positions 16, 54, 76, and 140 each coordinate Mg(2+).

It belongs to the RNase H family. In terms of assembly, monomer. Mg(2+) serves as cofactor.

The protein localises to the cytoplasm. It carries out the reaction Endonucleolytic cleavage to 5'-phosphomonoester.. Its function is as follows. Endonuclease that specifically degrades the RNA of RNA-DNA hybrids. This is Ribonuclease H from Granulibacter bethesdensis (strain ATCC BAA-1260 / CGDNIH1).